The following is a 757-amino-acid chain: Endosialin (757 aa).

A signal peptide spans 1-17 (MLLRLLLAWAAAGPTLG). Residues 18–687 (QDPWAAEPRA…EHSQRDDRWL (670 aa)) lie on the Extracellular side of the membrane. Residues 30-156 (GPSSCYALFP…CTLAVDGYLC (127 aa)) form the C-type lectin domain. Thr60 carries O-linked (GalNAc...) threonine glycosylation. The cysteines at positions 131 and 147 are disulfide-linked. Residues 162–232 (GACPALQDEA…WSRAGPLCLG (71 aa)) enclose the Sushi domain. The EGF-like; calcium-binding domain maps to 312 to 351 (DTDECQIAGVCQQMCVNYVGGFECYCSEGHELEADGISCS). Disulfide bonds link Cys316/Cys326, Cys322/Cys335, and Cys337/Cys350. O-linked (GalNAc...) threonine glycosylation is found at Thr401, Thr428, Thr448, Thr456, Thr459, Thr472, Thr519, Thr541, Thr543, Thr544, Thr545, Thr587, Thr593, Thr594, and Thr595. Residues Ser598 and Ser601 are each glycosylated (O-linked (GalNAc...) serine). O-linked (GalNAc...) threonine glycosylation is found at Thr612 and Thr619. Residues 618 to 627 (PTLLPSQSPT) are compositionally biased toward low complexity. A disordered region spans residues 618-662 (PTLLPSQSPTNQTSPISPTHPHSKAPQIPREDGPSPKLALWLPSP). 2 O-linked (GalNAc...) serine glycosylation sites follow: Ser623 and Ser625. Residues Thr627 and Thr630 are each glycosylated (O-linked (GalNAc...) threonine). The O-linked (GalNAc...) serine glycan is linked to Ser631. O-linked (GalNAc...) threonine glycosylation occurs at Thr636. O-linked (GalNAc...) serine glycosylation occurs at Ser640. The chain crosses the membrane as a helical span at residues 688–708 (LVALLVPTCVFLVVLLALGIV). Residues 709–757 (YCTRCGPHAPNKRITDCYRWVIHAGSKSPTEPMPPRGSLTGVQTCRTSV) are Cytoplasmic-facing. Residues 737–757 (PTEPMPPRGSLTGVQTCRTSV) form a disordered region. Ser746 carries the post-translational modification Phosphoserine. Positions 748-757 (TGVQTCRTSV) are enriched in polar residues.

In terms of assembly, interacts with PDGFRA; this interaction promotes PDGF receptor signaling pathway. Interacts with integrin beta-1/ITGB1. Interacts with insulin receptor/INSR; this interaction diminishes INSR autophosphorylation. Post-translationally, O-glycosylated with sialylated oligosaccharides. In terms of processing, may be N-glycosylated. Expressed in tumor endothelial cells but absent or barely detectable in normal endothelial cells. Expressed in metastatic lesions of the liver and during angiogenesis of corpus luteum formation and wound healing. Expressed in vascular endothelial cells of malignant tumors but not in normal blood vessels. Expressed in stromal fibroblasts. Strongly expressed in pericytes. Expressed on stromal cells and cells with lymphoid morphology such a T-cells.

It localises to the membrane. Functionally, cell surface glycoprotein involved in various biological processes including angiogenesis, immune response modulation, and tissue remodeling and repair. Participates in pericyte proliferation through positive modulation of the PDGF receptor signaling pathway. Acts as a scaffold for factor X, triggering allosteric changes and the spatial re-alignment of factor X with the TF-factor VIIa complex, thereby enhancing coagulation activation. Modulates the insulin signaling pathway by interacting with insulin receptor/INSR and by diminishing its capacity to be autophosphorylated in response to insulin. Also regulates LPS-induced inflammatory response in macrophages by favoring the production of proinflammatory cytokines. In human, negatively regulates T-cell proliferation compared with stromal cells where it increases proliferation. The sequence is that of Endosialin (CD248) from Homo sapiens (Human).